A 197-amino-acid chain; its full sequence is Probable chorismate pyruvate-lyase (197 aa).

Positions 1 to 14 (MRFDAADAHWRETP) are enriched in basic and acidic residues. The segment at 1–25 (MRFDAADAHWRETPRPGASGAQKDW) is disordered. Substrate is bound by residues Arg73, Leu111, and Glu173.

This sequence belongs to the UbiC family.

The protein resides in the cytoplasm. The catalysed reaction is chorismate = 4-hydroxybenzoate + pyruvate. Its pathway is cofactor biosynthesis; ubiquinone biosynthesis. Functionally, removes the pyruvyl group from chorismate, with concomitant aromatization of the ring, to provide 4-hydroxybenzoate (4HB) for the ubiquinone pathway. The polypeptide is Probable chorismate pyruvate-lyase (Burkholderia thailandensis (strain ATCC 700388 / DSM 13276 / CCUG 48851 / CIP 106301 / E264)).